An 831-amino-acid chain; its full sequence is Histone acetyltransferase SAS3 (831 aa).

The 307-residue stretch at 267 to 573 (VWFSQIEYIV…VKYDKLLWEP (307 aa)) folds into the MYST-type HAT domain. The C2HC MYST-type zinc finger occupies 300-325 (VFICEFCLKYMTSRYTFYRHQLKCLT). Lysine 367 is subject to N6-acetyllysine; by autocatalysis. Acetyl-CoA contacts are provided by residues 419–421 (ILT) and 426–432 (QRKGYGQ). Glutamate 452 serves as the catalytic Proton donor/acceptor. Residue serine 456 coordinates acetyl-CoA. Disordered regions lie at residues 614-639 (ENYN…KTSK) and 719-813 (PLGN…SHIR). Basic residues predominate over residues 621-633 (AHNKRRRRRRRSS). Acidic residues-rich tracts occupy residues 736-746 (EQDEVENDVDT) and 755-794 (KEDE…DDDE). Positions 795 to 812 (DGKRKGQEQDENDIESHI) are enriched in basic and acidic residues.

This sequence belongs to the MYST (SAS/MOZ) family. In terms of assembly, component of the NuA3 histone acetyltransferase (HAT) complex. The NuA3 HAT complex has 2 functionally distinct forms that participate in transcription. The NuA3a HAT complex is composed of at least NTO1, SAS3, TAF14, YNG1 and EAF6. The NuA3b HAT complex contains an additional subunit, PDP3. SAS3 interacts with CDC68/SPT16. Autoacetylation at Lys-367 is required for proper function.

It is found in the nucleus. It carries out the reaction L-lysyl-[protein] + acetyl-CoA = N(6)-acetyl-L-lysyl-[protein] + CoA + H(+). Its function is as follows. Catalytic component of the NuA3 histone acetyltransferase complex, that acetylates H3K14. The NuA3 HAT complex has 2 functionally distinct forms. NuA3a binds H3K4me3, through the PHD finger of YNG1, and acetylates H3K14 at the promoter region of actively transcribed genes to promote transcription initiation. NuA3b binds H3K36me3 at the coding regions of actively transcribed genes, through the PWWP domain of PDP3, and coordinates transcription elongation. In vitro, SAS3 acetylates free histones H3 and H4. It is involved in silencing the HMR locus. The polypeptide is Histone acetyltransferase SAS3 (Saccharomyces cerevisiae (strain ATCC 204508 / S288c) (Baker's yeast)).